The sequence spans 152 residues: MRGGTVLLILILLLGVIARSPMTALAAASILALSYLGWGGLLEWIEQNGVDTGLIMLTLAMLAPFATGKVGLREVLLSFASLPGIIAVIGGVLATNLNKRGIDLLSGEPQIIVGMIVGSLLGIVLFGGIPVGPLMAGGLTALILQIYGWLSK.

5 consecutive transmembrane segments (helical) span residues 6–26, 52–72, 75–95, 111–131, and 132–152; these read VLLI…TALA, TGLI…KVGL, VLLS…VLAT, IIVG…GIPV, and GPLM…WLSK.

The protein belongs to the UPF0756 family.

The protein localises to the cell membrane. The protein is UPF0756 membrane protein Helmi_09930 of Heliobacterium modesticaldum (strain ATCC 51547 / Ice1).